Reading from the N-terminus, the 277-residue chain is Phosphoenolpyruvate synthase regulatory protein (277 aa).

Gly157–Thr164 provides a ligand contact to ADP.

It belongs to the pyruvate, phosphate/water dikinase regulatory protein family. PSRP subfamily.

It carries out the reaction [pyruvate, water dikinase] + ADP = [pyruvate, water dikinase]-phosphate + AMP + H(+). The catalysed reaction is [pyruvate, water dikinase]-phosphate + phosphate + H(+) = [pyruvate, water dikinase] + diphosphate. Its function is as follows. Bifunctional serine/threonine kinase and phosphorylase involved in the regulation of the phosphoenolpyruvate synthase (PEPS) by catalyzing its phosphorylation/dephosphorylation. The protein is Phosphoenolpyruvate synthase regulatory protein of Escherichia fergusonii (strain ATCC 35469 / DSM 13698 / CCUG 18766 / IAM 14443 / JCM 21226 / LMG 7866 / NBRC 102419 / NCTC 12128 / CDC 0568-73).